We begin with the raw amino-acid sequence, 297 residues long: MSDFDFTQRFLFDDTDVRGELADLRGSYAEVLAKHPYPEPVAQLLGEMLAAAALLVGTLKFDGLLVLQARSPGPIPLLMVECSSEREVRGIARYHAEQVEPGAGLRELMPEGLLTLTIDPRRGQRYQGIVELRGESLADCLSGYFADSEQLPTRFWLNADGRRARGLLLQQLPADRLKDAEARTLNWEHLVTLADTLTAEELLGLDNETLLRRLYHQEAVRLFEPLPLRFRCSCSRERSANALSSLGQADAEQLLRERDGLVVVDCQFCNQRYEFDATDIAQLFAGGGSGAPSATRH.

Disulfide bonds link cysteine 232-cysteine 234 and cysteine 266-cysteine 269.

It belongs to the HSP33 family. Under oxidizing conditions two disulfide bonds are formed involving the reactive cysteines. Under reducing conditions zinc is bound to the reactive cysteines and the protein is inactive.

It localises to the cytoplasm. In terms of biological role, redox regulated molecular chaperone. Protects both thermally unfolding and oxidatively damaged proteins from irreversible aggregation. Plays an important role in the bacterial defense system toward oxidative stress. The sequence is that of 33 kDa chaperonin from Azotobacter vinelandii (strain DJ / ATCC BAA-1303).